The following is a 160-amino-acid chain: Lipoprotein signal peptidase (160 aa).

3 helical membrane-spanning segments follow: residues 5–25 (LVFF…KFII), 60–80 (IEWL…AFFI), and 84–104 (LPFL…AGTV). Active-site residues include D118 and D132. The helical transmembrane segment at 128-148 (FNIADSCLTVGVIGLLLLYIV) threads the bilayer.

The protein belongs to the peptidase A8 family.

It localises to the cell membrane. It catalyses the reaction Release of signal peptides from bacterial membrane prolipoproteins. Hydrolyzes -Xaa-Yaa-Zaa-|-(S,diacylglyceryl)Cys-, in which Xaa is hydrophobic (preferably Leu), and Yaa (Ala or Ser) and Zaa (Gly or Ala) have small, neutral side chains.. Its pathway is protein modification; lipoprotein biosynthesis (signal peptide cleavage). This protein specifically catalyzes the removal of signal peptides from prolipoproteins. The chain is Lipoprotein signal peptidase from Dehalococcoides mccartyi (strain ATCC BAA-2100 / JCM 16839 / KCTC 5957 / BAV1).